A 148-amino-acid polypeptide reads, in one-letter code: Transcriptional regulator MraZ (148 aa).

2 SpoVT-AbrB domains span residues Glu-5–Glu-53 and Ser-82–Ala-125.

The protein belongs to the MraZ family. As to quaternary structure, forms oligomers.

It localises to the cytoplasm. It is found in the nucleoid. The chain is Transcriptional regulator MraZ from Xanthomonas axonopodis pv. citri (strain 306).